Reading from the N-terminus, the 212-residue chain is Ropporin-1 (212 aa).

The RIIa domain maps to P12–A43. A Phosphoserine modification is found at S56. The interval V209 to E212 is interaction with RHPN1.

Belongs to the ropporin family. As to quaternary structure, homodimer. Interacts with AKAP3. May interact with SPA17. Interacts with RHPN1. Interacts with FSCB; the interaction increases upon spermatozoa capacitation conditions. Interacts with CFAP61. Post-translationally, sumoylated, sumoylation decreases upon spermatozoa capacitation conditions.

The protein resides in the cell projection. It is found in the cilium. The protein localises to the flagellum. Functionally, important for male fertility. With ROPN1L, involved in fibrous sheath integrity and sperm motility, plays a role in PKA-dependent signaling processes required for spermatozoa capacitation. The protein is Ropporin-1 (ROPN1) of Bos taurus (Bovine).